A 452-amino-acid polypeptide reads, in one-letter code: Phosphoglucosamine mutase (452 aa).

S104 (phosphoserine intermediate) is an active-site residue. Mg(2+)-binding residues include S104, D244, D246, and D248. A Phosphoserine modification is found at S104.

It belongs to the phosphohexose mutase family. Mg(2+) is required as a cofactor. Activated by phosphorylation.

The enzyme catalyses alpha-D-glucosamine 1-phosphate = D-glucosamine 6-phosphate. Functionally, catalyzes the conversion of glucosamine-6-phosphate to glucosamine-1-phosphate. The protein is Phosphoglucosamine mutase of Pediococcus pentosaceus (strain ATCC 25745 / CCUG 21536 / LMG 10740 / 183-1w).